The sequence spans 147 residues: Ribosome maturation factor RimP (147 aa).

This sequence belongs to the RimP family.

The protein localises to the cytoplasm. Required for maturation of 30S ribosomal subunits. The polypeptide is Ribosome maturation factor RimP (Sulfurihydrogenibium azorense (strain DSM 15241 / OCM 825 / Az-Fu1)).